The following is a 293-amino-acid chain: tRNA pseudouridine synthase B (293 aa).

Residue Asp38 is the Nucleophile of the active site.

Belongs to the pseudouridine synthase TruB family. Type 1 subfamily.

It catalyses the reaction uridine(55) in tRNA = pseudouridine(55) in tRNA. Responsible for synthesis of pseudouridine from uracil-55 in the psi GC loop of transfer RNAs. The chain is tRNA pseudouridine synthase B from Solibacter usitatus (strain Ellin6076).